The chain runs to 428 residues: Dihydroorotase (428 aa).

2 residues coordinate Zn(2+): H59 and H61. Residues 61 to 63 (HLR) and N93 contribute to the substrate site. Positions 151, 178, and 231 each coordinate Zn(2+). N277 provides a ligand contact to substrate. D304 is a binding site for Zn(2+). D304 is an active-site residue. Residues H308 and 322-323 (FG) each bind substrate.

Belongs to the metallo-dependent hydrolases superfamily. DHOase family. Class I DHOase subfamily. The cofactor is Zn(2+).

It catalyses the reaction (S)-dihydroorotate + H2O = N-carbamoyl-L-aspartate + H(+). It participates in pyrimidine metabolism; UMP biosynthesis via de novo pathway; (S)-dihydroorotate from bicarbonate: step 3/3. In terms of biological role, catalyzes the reversible cyclization of carbamoyl aspartate to dihydroorotate. This chain is Dihydroorotase, found in Bacillus pumilus (strain SAFR-032).